We begin with the raw amino-acid sequence, 442 residues long: tRNA-2-methylthio-N(6)-dimethylallyladenosine synthase (442 aa).

In terms of domain architecture, MTTase N-terminal spans 3 to 118; that stretch reads KKVFIKTFGC…LPELLNARAA (116 aa). Residues Cys12, Cys49, Cys81, Cys155, Cys159, and Cys162 each contribute to the [4Fe-4S] cluster site. In terms of domain architecture, Radical SAM core spans 141–374; it reads RVEGSSAFVS…QAVINNNIKD (234 aa). Positions 377 to 440 constitute a TRAM domain; the sequence is DERVGTVQRL…TFTLRGEVVV (64 aa).

The protein belongs to the methylthiotransferase family. MiaB subfamily. As to quaternary structure, monomer. [4Fe-4S] cluster serves as cofactor.

Its subcellular location is the cytoplasm. It carries out the reaction N(6)-dimethylallyladenosine(37) in tRNA + (sulfur carrier)-SH + AH2 + 2 S-adenosyl-L-methionine = 2-methylsulfanyl-N(6)-dimethylallyladenosine(37) in tRNA + (sulfur carrier)-H + 5'-deoxyadenosine + L-methionine + A + S-adenosyl-L-homocysteine + 2 H(+). Catalyzes the methylthiolation of N6-(dimethylallyl)adenosine (i(6)A), leading to the formation of 2-methylthio-N6-(dimethylallyl)adenosine (ms(2)i(6)A) at position 37 in tRNAs that read codons beginning with uridine. The chain is tRNA-2-methylthio-N(6)-dimethylallyladenosine synthase from Delftia acidovorans (strain DSM 14801 / SPH-1).